A 188-amino-acid polypeptide reads, in one-letter code: Elongation factor P (188 aa).

Lys-34 carries the N6-(3,6-diaminohexanoyl)-5-hydroxylysine modification.

Belongs to the elongation factor P family. In terms of processing, is beta-lysylated on the epsilon-amino group of Lys-34 by the combined action of EpmA and EpmB, and then hydroxylated on the C5 position of the same residue by EpmC. Lysylation is critical for the stimulatory effect of EF-P on peptide-bond formation. The lysylation moiety would extend toward the peptidyltransferase center and stabilize the terminal 3-CCA end of the tRNA. The hydroxylation of the C5 position on Lys-34 would allow additional potential stabilizing hydrogen-bond interactions with the P-tRNA.

It localises to the cytoplasm. It functions in the pathway protein biosynthesis; polypeptide chain elongation. Involved in peptide bond synthesis. Alleviates ribosome stalling that occurs when 3 or more consecutive Pro residues or the sequence PPG is present in a protein, possibly by augmenting the peptidyl transferase activity of the ribosome. Modification of Lys-34 is required for alleviation. The sequence is that of Elongation factor P from Shigella boydii serotype 18 (strain CDC 3083-94 / BS512).